The primary structure comprises 78 residues: uncharacterized protein (78 aa).

The helical transmembrane segment at 13-33 (STILILLMSVLILLLSIDILA) threads the bilayer.

Its subcellular location is the membrane. This is an uncharacterized protein from Methanocaldococcus jannaschii (strain ATCC 43067 / DSM 2661 / JAL-1 / JCM 10045 / NBRC 100440) (Methanococcus jannaschii).